The following is a 258-amino-acid chain: MGRLQRTLSNISEESDTDNGRVAVVGGSIEYPNQPALVGRAALRTGTDHVRTLVPEALYAPVAGSSPNLLVSPYDGDQFDQDAAADAVDICEWADALVIGPGLVDAEADAIRDVLERTDIPVVVDALAIEPALESDLSRAVLTPSGSEDGPIYEAYGSLRAFTEETGAVITLTGGVDVIVTTGERLENDTGTSALTVAGTGDTLAGITASLLGQEMDRQDAAELGAWILGKSGELATAEYGPGVVATDVIECIPKTIR.

The YjeF C-terminal domain maps to 1–258 (MGRLQRTLSN…VIECIPKTIR (258 aa)). Glycine 201 serves as a coordination point for AMP. Aspartate 202 is a binding site for (6S)-NADPHX.

This sequence belongs to the NnrD/CARKD family. In terms of assembly, homotetramer. Mg(2+) is required as a cofactor.

It carries out the reaction (6S)-NADHX + ADP = AMP + phosphate + NADH + H(+). The catalysed reaction is (6S)-NADPHX + ADP = AMP + phosphate + NADPH + H(+). Its function is as follows. Catalyzes the dehydration of the S-form of NAD(P)HX at the expense of ADP, which is converted to AMP. Together with NAD(P)HX epimerase, which catalyzes the epimerization of the S- and R-forms, the enzyme allows the repair of both epimers of NAD(P)HX, a damaged form of NAD(P)H that is a result of enzymatic or heat-dependent hydration. The sequence is that of ADP-dependent (S)-NAD(P)H-hydrate dehydratase from Natrialba magadii (strain ATCC 43099 / DSM 3394 / CCM 3739 / CIP 104546 / IAM 13178 / JCM 8861 / NBRC 102185 / NCIMB 2190 / MS3) (Natronobacterium magadii).